Here is a 91-residue protein sequence, read N- to C-terminus: Cell division topological specificity factor (91 aa).

It belongs to the MinE family.

In terms of biological role, prevents the cell division inhibition by proteins MinC and MinD at internal division sites while permitting inhibition at polar sites. This ensures cell division at the proper site by restricting the formation of a division septum at the midpoint of the long axis of the cell. The protein is Cell division topological specificity factor of Thermoanaerobacter pseudethanolicus (strain ATCC 33223 / 39E) (Clostridium thermohydrosulfuricum).